A 1083-amino-acid chain; its full sequence is Ubiquitin-protein ligase E3C (1083 aa).

Composition is skewed to basic and acidic residues over residues 1 to 10 and 20 to 40; these read MFSFEGDFKT and SRKE…RKRE. A disordered region spans residues 1-40; sequence MFSFEGDFKTRPKVSLGGASRKEEKASLLHRTQEERRKRE. Positions 1 to 60 are cis-determinant of acceptor ubiquitin-binding; that stretch reads MFSFEGDFKTRPKVSLGGASRKEEKASLLHRTQEERRKREEERRRLKNAVIIQSFIRGYR. The region spanning 45 to 74 is the IQ domain; it reads RLKNAVIIQSFIRGYRDRKQQYFIQRSAFD. Residues 354–386 form a disordered region; it reads ASPTGTGCPDSTSDSEDDNEETDQPNSPEDGRV. A compositionally biased stretch (acidic residues) spans 366-376; that stretch reads SDSEDDNEETD. Residues 744-1083 enclose the HECT domain; it reads NEPDLKKRIR…IECAAGFELS (340 aa). Lys903 is covalently cross-linked (Glycyl lysine isopeptide (Lys-Gly) (interchain with G-Cter in ubiquitin); by autocatalysis). The Glycyl thioester intermediate role is filled by Cys1051.

The protein belongs to the UBE3C family. In terms of assembly, interacts with 26S proteasomes. Interacts (via the HECT domain) with UBE2D1 and, less efficiently, with UBE2L3. Autoubiquitinated; promoting its own degradation.

It carries out the reaction S-ubiquitinyl-[E2 ubiquitin-conjugating enzyme]-L-cysteine + [acceptor protein]-L-lysine = [E2 ubiquitin-conjugating enzyme]-L-cysteine + N(6)-ubiquitinyl-[acceptor protein]-L-lysine.. Its pathway is protein modification; protein ubiquitination. E3 ubiquitin-protein ligase that specifically catalyzes 'Lys-29'- and 'Lys-48'-linked polyubiquitin chains. Accepts ubiquitin from the E2 ubiquitin-conjugating enzyme UBE2D1 in the form of a thioester and then directly transfers the ubiquitin to targeted substrates. Associates with the proteasome and promotes elongation of ubiquitin chains on substrates bound to the 26S proteasome. Also catalyzes 'Lys-29'- and 'Lys-48'-linked ubiquitination of 26S proteasome subunit ADRM1/RPN13 in response to proteotoxic stress, impairing the ability of the proteasome to bind and degrade ubiquitin-conjugated proteins. Acts as a negative regulator of autophagy by mediating 'Lys-29'- and 'Lys-48'-linked ubiquitination of PIK3C3/VPS34, promoting its degradation. Can assemble unanchored poly-ubiquitin chains in either 'Lys-29'- or 'Lys-48'-linked polyubiquitin chains; with some preference for 'Lys-48' linkages. Acts as a negative regulator of type I interferon by mediating 'Lys-48'-linked ubiquitination of IRF3 and IRF7, leading to their degradation by the proteasome. Catalyzes ubiquitination and degradation of CAND2. The chain is Ubiquitin-protein ligase E3C from Mus musculus (Mouse).